The following is an 86-amino-acid chain: Weak neurotoxin 8 (86 aa).

A signal peptide spans 1–21 (MKTLLLTLVVVTIVCLDLGYT). 5 disulfide bridges follow: cysteine 24–cysteine 45, cysteine 27–cysteine 32, cysteine 38–cysteine 63, cysteine 67–cysteine 78, and cysteine 79–cysteine 84.

The protein belongs to the three-finger toxin family. Ancestral subfamily. Orphan group II sub-subfamily. In terms of tissue distribution, expressed by the venom gland.

It localises to the secreted. Functionally, binds with low affinity to muscular (alpha-1-beta-1-delta-epsilon/CHRNA1-CHRNB1-CHRND-CHRNE) and very low affinity to neuronal (alpha-7/CHRNA7) nicotinic acetylcholine receptor (nAChR). The chain is Weak neurotoxin 8 from Naja sputatrix (Malayan spitting cobra).